The following is a 250-amino-acid chain: Leucyl/phenylalanyl-tRNA--protein transferase (250 aa).

It belongs to the L/F-transferase family.

The protein localises to the cytoplasm. The catalysed reaction is N-terminal L-lysyl-[protein] + L-leucyl-tRNA(Leu) = N-terminal L-leucyl-L-lysyl-[protein] + tRNA(Leu) + H(+). The enzyme catalyses N-terminal L-arginyl-[protein] + L-leucyl-tRNA(Leu) = N-terminal L-leucyl-L-arginyl-[protein] + tRNA(Leu) + H(+). It catalyses the reaction L-phenylalanyl-tRNA(Phe) + an N-terminal L-alpha-aminoacyl-[protein] = an N-terminal L-phenylalanyl-L-alpha-aminoacyl-[protein] + tRNA(Phe). Functions in the N-end rule pathway of protein degradation where it conjugates Leu, Phe and, less efficiently, Met from aminoacyl-tRNAs to the N-termini of proteins containing an N-terminal arginine or lysine. In Cupriavidus pinatubonensis (strain JMP 134 / LMG 1197) (Cupriavidus necator (strain JMP 134)), this protein is Leucyl/phenylalanyl-tRNA--protein transferase.